Consider the following 670-residue polypeptide: Protein ACCELERATED CELL DEATH 6 (670 aa).

At M1–T456 the chain is on the cytoplasmic side. A disordered region spans residues L18 to K47. ANK repeat units follow at residues E66–R95, T100–F129, S134–A163, D182–F211, K216–R248, Q260–D290, D295–V325, D329–Y358, L363–H391, and D399–K428. Residues L457–I477 traverse the membrane as a helical segment. At Q478–N492 the chain is on the extracellular side. A helical transmembrane segment spans residues A493–P513. At G514–F537 the chain is on the cytoplasmic side. A helical transmembrane segment spans residues I538–I558. The Extracellular segment spans residues W559–P577. Residues L578–I598 form a helical membrane-spanning segment. The Cytoplasmic segment spans residues A599–K602. A helical membrane pass occupies residues W603–L623. The Extracellular segment spans residues G624–S638. A helical membrane pass occupies residues G639 to I659. At K660–E670 the chain is on the cytoplasmic side.

In terms of assembly, component of large complexes containing, at least, FLS2, HSP70 and ACD6 in endoplasmic reticulum, plasma membrane and soluble fraction. Associated with HSP70 proteins during endoplasmic reticulum-associated degradation (ERAD). Reduced complex levels upon benzothiazole (BTH) treatment. Post-translationally, ubiquitinated. In terms of tissue distribution, basal expression requires light and salicylic acid (SA).

Its subcellular location is the cell membrane. The protein localises to the endoplasmic reticulum membrane. Its function is as follows. Dose-dependent activator of the defense response against virulent pathogens, including bacteria, fungi and oomycetes, that acts in a positive feedback loop with the defense signal salicylic acid (SA). Regulates the salicylic acid (SA) signaling pathway leading to cell death and modulating cell fate (e.g. cell enlargement and/or cell division). In response to SA signaling, triggers the accumulation of FLS2 at the plasma membrane, thus priming defenses. Involved in SA-dependent freezing signaling and tolerance. The polypeptide is Protein ACCELERATED CELL DEATH 6 (Arabidopsis thaliana (Mouse-ear cress)).